The following is a 154-amino-acid chain: Endoribonuclease YbeY (154 aa).

Zn(2+)-binding residues include His-113, His-117, and His-123.

Belongs to the endoribonuclease YbeY family. Zn(2+) serves as cofactor.

It is found in the cytoplasm. Single strand-specific metallo-endoribonuclease involved in late-stage 70S ribosome quality control and in maturation of the 3' terminus of the 16S rRNA. The polypeptide is Endoribonuclease YbeY (Anaplasma marginale (strain Florida)).